Here is a 478-residue protein sequence, read N- to C-terminus: Proline--tRNA ligase (478 aa).

This sequence belongs to the class-II aminoacyl-tRNA synthetase family. ProS type 3 subfamily. In terms of assembly, homodimer.

It localises to the cytoplasm. The enzyme catalyses tRNA(Pro) + L-proline + ATP = L-prolyl-tRNA(Pro) + AMP + diphosphate. Its function is as follows. Catalyzes the attachment of proline to tRNA(Pro) in a two-step reaction: proline is first activated by ATP to form Pro-AMP and then transferred to the acceptor end of tRNA(Pro). This Clostridium novyi (strain NT) protein is Proline--tRNA ligase.